Reading from the N-terminus, the 249-residue chain is Diaminopimelate epimerase (249 aa).

Substrate contacts are provided by Asn11 and Asn60. Cys69 functions as the Proton donor in the catalytic mechanism. Residues 70–71, Asn164, and 182–183 each bind substrate; these read GN and ER. Catalysis depends on Cys192, which acts as the Proton acceptor. 193–194 provides a ligand contact to substrate; the sequence is GT.

The protein belongs to the diaminopimelate epimerase family. In terms of assembly, homodimer.

It is found in the cytoplasm. It carries out the reaction (2S,6S)-2,6-diaminopimelate = meso-2,6-diaminopimelate. Its pathway is amino-acid biosynthesis; L-lysine biosynthesis via DAP pathway; DL-2,6-diaminopimelate from LL-2,6-diaminopimelate: step 1/1. Catalyzes the stereoinversion of LL-2,6-diaminopimelate (L,L-DAP) to meso-diaminopimelate (meso-DAP), a precursor of L-lysine and an essential component of the bacterial peptidoglycan. The polypeptide is Diaminopimelate epimerase (Campylobacter jejuni subsp. jejuni serotype O:2 (strain ATCC 700819 / NCTC 11168)).